We begin with the raw amino-acid sequence, 92 residues long: Small ribosomal subunit protein uS19c (92 aa).

It belongs to the universal ribosomal protein uS19 family.

It is found in the plastid. Its subcellular location is the chloroplast. Functionally, protein S19 forms a complex with S13 that binds strongly to the 16S ribosomal RNA. The polypeptide is Small ribosomal subunit protein uS19c (Staurastrum punctulatum (Green alga)).